The following is a 713-amino-acid chain: MCGIFGYVNFLVDKSKGEIIDNLIEGLQRLEYRGYDSAGIAVDGKLTKDPSNGDEEYMDSIIIKTTGKVKVLKQKIIDDQIDRSAIFDNHVGIAHTRWATHGQPKTENCHPHKSDPKGEFIVVHNGIITNYAALRKYLLSKGHVFESETDTECIAKLFKHFYDLNVKAGVFPDLNELTKQVLHELEGSYGLLVKSYHYPGEVCGTRKGSPLLVGVKTDKKLKVDFVDVEFEAQQQHRPQQPQINHNGATSAAELGFIPVAPGEQNLRTSQSRAFLSEDDLPMPVEFFLSSDPASVVQHTKKVLFLEDDDIAHIYDGELRIHRASTKSAGESTVRPIQTLEMELNEIMKGPYKHFMQKEIFEQPDSAFNTMRGRIDFENCVVTLGGLKSWLSTIRRCRRIIMIACGTSYHSCLATRSIFEELTEIPVSVELASDFLDRRSPVFRDDTCVFVSQSGETADSILALQYCLERGALTVGIVNSVGSSMSRQTHCGVHINAGPEIGVASTKAYTSQYIALVMFALSLSNDSISRKGRHEEIIKGLQKIPEQIKQVLKLENKIKDLCNSSLNDQKSLLLLGRGYQFATALEGALKIKEISYMHSEGVLAGELKHGILALVDEDLPIIAFATRDSLFPKVMSAIEQVTARDGRPIVICNEGDAIISNDKVHTTLEVPETVDCLQGLLNVIPLQLISYWLAVNRGIDVDFPRNLAKSVTVE.

C2 serves as the catalytic For GATase activity. The Glutamine amidotransferase type-2 domain maps to 2-316; sequence CGIFGYVNFL…DDDIAHIYDG (315 aa). 2 SIS domains span residues 389 to 528 and 561 to 703; these read WLST…DSIS and CNSS…VDFP.

In terms of assembly, homotetramer.

It catalyses the reaction D-fructose 6-phosphate + L-glutamine = D-glucosamine 6-phosphate + L-glutamate. The protein operates within nucleotide-sugar biosynthesis; UDP-N-acetyl-alpha-D-glucosamine biosynthesis; alpha-D-glucosamine 6-phosphate from D-fructose 6-phosphate: step 1/1. Functionally, involved in amino sugar synthesis (formation of chitin, supplies the amino sugars of asparagine-linked oligosaccharides of glycoproteins). This is Glutamine--fructose-6-phosphate aminotransferase [isomerizing] (GFA1) from Candida albicans (strain SC5314 / ATCC MYA-2876) (Yeast).